The chain runs to 73 residues: Large ribosomal subunit protein bL32c (73 aa).

The protein belongs to the bacterial ribosomal protein bL32 family.

It localises to the plastid. It is found in the chloroplast. This Jasminum nudiflorum (Winter jasmine) protein is Large ribosomal subunit protein bL32c.